The following is a 129-amino-acid chain: Thioredoxin H7 (129 aa).

A Thioredoxin domain is found at 6–129 (SSVHDVHSSM…LVKKIEQHRV (124 aa)). Active-site nucleophile residues include Cys-55 and Cys-58. The cysteines at positions 55 and 58 are disulfide-linked.

The protein belongs to the thioredoxin family. Plant H-type subfamily.

The protein localises to the cytoplasm. Probable thiol-disulfide oxidoreductase that may be involved in the redox regulation of a number of cytosolic enzymes. The protein is Thioredoxin H7 (TRX7) of Arabidopsis thaliana (Mouse-ear cress).